The chain runs to 181 residues: Peptidyl-tRNA hydrolase (181 aa).

Tyr-14 serves as a coordination point for tRNA. The active-site Proton acceptor is His-19. 3 residues coordinate tRNA: Phe-61, Asn-63, and Asn-107.

This sequence belongs to the PTH family. In terms of assembly, monomer.

The protein localises to the cytoplasm. The catalysed reaction is an N-acyl-L-alpha-aminoacyl-tRNA + H2O = an N-acyl-L-amino acid + a tRNA + H(+). Hydrolyzes ribosome-free peptidyl-tRNAs (with 1 or more amino acids incorporated), which drop off the ribosome during protein synthesis, or as a result of ribosome stalling. Functionally, catalyzes the release of premature peptidyl moieties from peptidyl-tRNA molecules trapped in stalled 50S ribosomal subunits, and thus maintains levels of free tRNAs and 50S ribosomes. This is Peptidyl-tRNA hydrolase from Campylobacter fetus subsp. fetus (strain 82-40).